A 590-amino-acid polypeptide reads, in one-letter code: MHRYRSHTCGALRESHIDQTVRVSGWCHRIRDHGGLLFIDLRDHYGLTQCVADPDSPAFKDAEKLRAEWVVKIDGKVRRRPEGTDNADLPTGQVEIFITEIEVLGPAGELPLPVFGEQEYPEDIRLKYRFLDLRREKLHQNIMTRGAIVDSMRKRMKEQGFFEFQTPILTASSPEGARDFLVPSRIHPGRFYALPQAPQQYKQLLMMSGFDRYFQIAPCFRDEDPRADRLPGEFYQLDVEMSFITQEDVFAAMEPVITGVFEEFAKGKRVNSVWPRIPFAEAMQKYGSDKPDLRNPIEMQDVSEHFRGSGFKVFARMLEEPRNQVWAIPGKGGGSRAFCDRMNSWAQGEGQPGLGYIMWREGNEGAGPLANNIGPERTEAIRIALGLGAGDAAFFVAGDPAKFVRFAGLARTRVGEELNLVDKEQFALAWVVDFPMYEYNEDDKKVDFSHNPFSMPQGGMEALVTQDPLNIKAFQYDITCNGFEIASGGIRNHRPEAMVKAFEIAGYGEQEVVDRFGGMYRAFQYGAPPHGGMAAGVDRIVMLLCGTNNLREISLFPMNQRAEDLLMGAPSEVTPKQLRELHIRLNLQEE.

Residue Glu-175 coordinates L-aspartate. The tract at residues 199–202 (QQYK) is aspartate. L-aspartate contacts are provided by Arg-221 and His-450. An ATP-binding site is contributed by 221–223 (RDE). Position 484 (Glu-484) interacts with ATP. Position 491 (Arg-491) interacts with L-aspartate. 536–539 (GVDR) is a binding site for ATP.

This sequence belongs to the class-II aminoacyl-tRNA synthetase family. Type 1 subfamily. Homodimer.

The protein localises to the cytoplasm. The enzyme catalyses tRNA(Asx) + L-aspartate + ATP = L-aspartyl-tRNA(Asx) + AMP + diphosphate. In terms of biological role, aspartyl-tRNA synthetase with relaxed tRNA specificity since it is able to aspartylate not only its cognate tRNA(Asp) but also tRNA(Asn). Reaction proceeds in two steps: L-aspartate is first activated by ATP to form Asp-AMP and then transferred to the acceptor end of tRNA(Asp/Asn). The protein is Aspartate--tRNA(Asp/Asn) ligase of Rhodopseudomonas palustris (strain BisA53).